We begin with the raw amino-acid sequence, 162 residues long: Allophycocyanin alpha-B chain (162 aa).

An N4-methylasparagine modification is found at N71. A (2R,3E)-phycocyanobilin-binding site is contributed by C81.

It belongs to the phycobiliprotein family. Contains one covalently linked phycocyanobilin chromophore.

It is found in the plastid. Its subcellular location is the cyanelle thylakoid membrane. Allophycocyanin is a photosynthetic bile pigment-protein complex with maximum absorption at approximately 650 nanometers. This chain is Allophycocyanin alpha-B chain (apcD), found in Cyanophora paradoxa.